Reading from the N-terminus, the 141-residue chain is 15 kDa lipoprotein (141 aa).

The signal sequence occupies residues 1-17 (MVKRGRFALCLAVLLGA). Cys18 carries the N-palmitoyl cysteine lipid modification. Residue Cys18 is the site of S-diacylglycerol cysteine attachment.

Its subcellular location is the cell membrane. This chain is 15 kDa lipoprotein (tpp15), found in Treponema pallidum (strain Nichols).